Here is a 142-residue protein sequence, read N- to C-terminus: Large ribosomal subunit protein uL13 (142 aa).

This sequence belongs to the universal ribosomal protein uL13 family. As to quaternary structure, part of the 50S ribosomal subunit.

This protein is one of the early assembly proteins of the 50S ribosomal subunit, although it is not seen to bind rRNA by itself. It is important during the early stages of 50S assembly. The sequence is that of Large ribosomal subunit protein uL13 from Actinobacillus pleuropneumoniae serotype 5b (strain L20).